The primary structure comprises 462 residues: Retinoic acid receptor alpha (462 aa).

The tract at residues M1–P87 is modulating. A compositionally biased stretch (polar residues) spans G52 to Q64. Positions G52–S77 are disordered. S77 bears the Phosphoserine; by CDK7 mark. 2 NR C4-type zinc fingers span residues C88–C108 and C124–C148. Positions C88 to M153 form a DNA-binding region, nuclear receptor. Position 96 is a phosphoserine; by PKB/AKT1 (S96). A hinge region spans residues S154 to P182. Residues K166 and K171 each participate in a glycyl lysine isopeptide (Lys-Gly) (interchain with G-Cter in SUMO) cross-link. The NR LBD domain maps to E183 to S417. S219 is subject to Phosphoserine; by PKA. An all-trans-retinoate-binding site is contributed by C235. The short motif at I254–I258 is the UBR5-degron element. S287 is an all-trans-retinoate binding site. Position 369 is a phosphoserine; by PKA (S369). Residue K399 forms a Glycyl lysine isopeptide (Lys-Gly) (interchain with G-Cter in SUMO) linkage. The interval G404–G419 is required for binding corepressor NCOR1. The short motif at P408–N416 is the 9aaTAD element. Positions G419–P462 are disordered. Gly residues predominate over residues Q426 to L437. Positions C444–P462 are enriched in low complexity.

The protein belongs to the nuclear hormone receptor family. NR1 subfamily. As to quaternary structure, heterodimer; with RXRA (via C-terminus); association with RXRA is enhanced by pulsatile shear stress. Binds DNA preferentially as a heterodimer. RXRA serves as enhancer to induce RARA binding to RARE. Interacts with RXRG. Interacts with coactivators NCOA3 and NCOA6. Interacts with NCOA7; the interaction requires ligand-binding. Interacts (via the ligand-binding domain) with PRAME; the interaction is ligand (retinoic acid)-dependent. Interacts with AKT1; the interaction phosphorylates RARA and represses transactivation. Interacts with PRKAR1A; the interaction negatively regulates RARA transcriptional activity. Interacts with NCOR1 and NCOR2. Interacts with PRMT2. Interacts with LRIF1. Interacts with ASXL1 and NCOA1. Interacts with ACTN4. In a complex with HDAC3, HDAC5 and HDAC7; the HDACs serve as corepressors of RARA, causing its deacetylation and inhibition of RARE DNA element binding; association with HDAC3, HDAC5 and HDAC7 is increased upon oscillatory shear stress. Interacts with CDK7. In the absence of hormonal ligand, interacts with TACC1. In terms of processing, phosphorylated on serine and threonine residues. Phosphorylation does not change during cell cycle. Phosphorylation on Ser-77 is crucial for transcriptional activity. Phosphorylation by AKT1 is required for the repressor activity but has no effect on DNA binding, protein stability nor subcellular localization. Phosphorylated by PKA in vitro. This phosphorylation on Ser-219 and Ser-369 is critical for ligand binding, nuclear localization and transcriptional activity in response to FSH signaling. Post-translationally, sumoylated with SUMO2, mainly on Lys-399 which is also required for SENP6 binding. On all-trans retinoic acid (ATRA) binding, a conformational change may occur that allows sumoylation on two additional site, Lys-166 and Lys-171. Probably desumoylated by SENP6. Sumoylation levels determine nuclear localization and regulate ATRA-mediated transcriptional activity. Trimethylation enhances heterodimerization with RXRA and positively modulates the transcriptional activation. In terms of processing, ubiquitinated by UBR5, leading to its degradation: UBR5 specifically recognizes and binds ligand-bound RARA when it is not associated with coactivators (NCOAs). In presence of NCOAs, the UBR5-degron is not accessible, preventing its ubiquitination and degradation. Post-translationally, acetylated; acetylation is increased upon pulsatile shear stress and decreased upon oscillatory shear stress. In terms of tissue distribution, expressed in monocytes.

The protein resides in the nucleus. It localises to the cytoplasm. In terms of biological role, receptor for retinoic acid. Retinoic acid receptors bind as heterodimers to their target response elements in response to their ligands, all-trans or 9-cis retinoic acid, and regulate gene expression in various biological processes. The RXR/RAR heterodimers bind to the retinoic acid response elements (RARE) composed of tandem 5'-AGGTCA-3' sites known as DR1-DR5. In the absence of ligand, the RXR-RAR heterodimers associate with a multiprotein complex containing transcription corepressors that induce histone deacetylation, chromatin condensation and transcriptional suppression. On ligand binding, the corepressors dissociate from the receptors and associate with the coactivators leading to transcriptional activation. Formation of a complex with histone deacetylases might lead to inhibition of RARE DNA element binding and to transcriptional repression. Transcriptional activation and RARE DNA element binding might be supported by the transcription factor KLF2. RARA plays an essential role in the regulation of retinoic acid-induced germ cell development during spermatogenesis. Has a role in the survival of early spermatocytes at the beginning prophase of meiosis. In Sertoli cells, may promote the survival and development of early meiotic prophase spermatocytes. In concert with RARG, required for skeletal growth, matrix homeostasis and growth plate function. Together with RXRA, positively regulates microRNA-10a expression, thereby inhibiting the GATA6/VCAM1 signaling response to pulsatile shear stress in vascular endothelial cells. In association with HDAC3, HDAC5 and HDAC7 corepressors, plays a role in the repression of microRNA-10a and thereby promotes the inflammatory response. The sequence is that of Retinoic acid receptor alpha (RARA) from Homo sapiens (Human).